Here is a 250-residue protein sequence, read N- to C-terminus: NAD-dependent protein deacylase 1 (250 aa).

Residues 1-250 form the Deacetylase sirtuin-type domain; the sequence is MRAVVELLAG…PELLRRAFPG (250 aa). 19–39 contributes to the NAD(+) binding site; the sequence is GAGVSAESGIPTFRDALGGLW. Positions 64 and 67 each coordinate substrate. Residue 98-101 coordinates NAD(+); that stretch reads QNVD. His116 serves as the catalytic Proton acceptor. Cys124, Cys127, Cys152, and Cys155 together coordinate Zn(2+). NAD(+) is bound by residues 192–194, 218–220, and Ala236; these read GTS and NPQ.

Belongs to the sirtuin family. Class III subfamily. The cofactor is Zn(2+).

The protein localises to the cytoplasm. The enzyme catalyses N(6)-acetyl-L-lysyl-[protein] + NAD(+) + H2O = 2''-O-acetyl-ADP-D-ribose + nicotinamide + L-lysyl-[protein]. The catalysed reaction is N(6)-succinyl-L-lysyl-[protein] + NAD(+) + H2O = 2''-O-succinyl-ADP-D-ribose + nicotinamide + L-lysyl-[protein]. NAD-dependent lysine deacetylase and desuccinylase that specifically removes acetyl and succinyl groups on target proteins. Modulates the activities of several proteins which are inactive in their acylated form. The polypeptide is NAD-dependent protein deacylase 1 (Pseudomonas aeruginosa (strain ATCC 15692 / DSM 22644 / CIP 104116 / JCM 14847 / LMG 12228 / 1C / PRS 101 / PAO1)).